Here is a 296-residue protein sequence, read N- to C-terminus: NADH-cytochrome b5 reductase 2 (296 aa).

The helical transmembrane segment at Leu12–Leu29 threads the bilayer. Positions Asn47–Lys151 constitute an FAD-binding FR-type domain. Ser154 to Leu189 serves as a coordination point for FAD.

It belongs to the flavoprotein pyridine nucleotide cytochrome reductase family. FAD serves as cofactor.

Its subcellular location is the mitochondrion outer membrane. It carries out the reaction 2 Fe(III)-[cytochrome b5] + NADH = 2 Fe(II)-[cytochrome b5] + NAD(+) + H(+). In terms of biological role, may mediate the reduction of outer membrane cytochrome b5. This is NADH-cytochrome b5 reductase 2 (MCR1) from Kluyveromyces lactis (strain ATCC 8585 / CBS 2359 / DSM 70799 / NBRC 1267 / NRRL Y-1140 / WM37) (Yeast).